Reading from the N-terminus, the 320-residue chain is Putative polysaccharide deacetylase (320 aa).

The NodB homology domain maps to 69-303 (RSIESCFEYG…ITSKEGVWVA (235 aa)).

Belongs to the polysaccharide deacetylase family. Homodimer.

It is found in the prospore. Functionally, may deacetylate chitin. Required for spore formation. The sequence is that of Putative polysaccharide deacetylase from Schizosaccharomyces pombe (strain 972 / ATCC 24843) (Fission yeast).